The sequence spans 46 residues: Protein PsbN (46 aa).

The helical transmembrane segment at 10 to 30 threads the bilayer; the sequence is LIITILAVTIAFTAVSLYTAF.

The protein belongs to the PsbN family.

Its subcellular location is the cellular thylakoid membrane. Functionally, may play a role in photosystem I and II biogenesis. This Acaryochloris marina (strain MBIC 11017) protein is Protein PsbN.